The primary structure comprises 300 residues: Ribosomal protein L11 methyltransferase (300 aa).

S-adenosyl-L-methionine-binding residues include threonine 152, glycine 173, aspartate 195, and asparagine 234.

It belongs to the methyltransferase superfamily. PrmA family.

The protein localises to the cytoplasm. It catalyses the reaction L-lysyl-[protein] + 3 S-adenosyl-L-methionine = N(6),N(6),N(6)-trimethyl-L-lysyl-[protein] + 3 S-adenosyl-L-homocysteine + 3 H(+). In terms of biological role, methylates ribosomal protein L11. This chain is Ribosomal protein L11 methyltransferase, found in Burkholderia lata (strain ATCC 17760 / DSM 23089 / LMG 22485 / NCIMB 9086 / R18194 / 383).